We begin with the raw amino-acid sequence, 282 residues long: Shikimate dehydrogenase (NADP(+)) (282 aa).

Residues 15-17 (SKS) and T62 contribute to the shikimate site. K66 acts as the Proton acceptor in catalysis. 2 residues coordinate shikimate: N87 and D103. NADP(+)-binding positions include 127–131 (GAGGA), 151–156 (NRTHTK), and M220. Y222 provides a ligand contact to shikimate. An NADP(+)-binding site is contributed by G244.

Belongs to the shikimate dehydrogenase family. As to quaternary structure, homodimer.

It carries out the reaction shikimate + NADP(+) = 3-dehydroshikimate + NADPH + H(+). It participates in metabolic intermediate biosynthesis; chorismate biosynthesis; chorismate from D-erythrose 4-phosphate and phosphoenolpyruvate: step 4/7. Functionally, involved in the biosynthesis of the chorismate, which leads to the biosynthesis of aromatic amino acids. Catalyzes the reversible NADPH linked reduction of 3-dehydroshikimate (DHSA) to yield shikimate (SA). The chain is Shikimate dehydrogenase (NADP(+)) from Shewanella baltica (strain OS223).